The following is a 185-amino-acid chain: HTH-type transcriptional repressor OpcR (185 aa).

The H-T-H motif DNA-binding region spans 49-73 (LSELSEATGMSKTRMSQVVREMIDA).

Belongs to the GbsR family.

With respect to regulation, is not choline-responsive. Functionally, negatively regulates the transcription of the opuC operon. In the absence of GbsR, is also a negative regulator of the opuB operon. Binds to an inverted repeat in the promoter region of the operons. This is HTH-type transcriptional repressor OpcR (opcR) from Bacillus subtilis (strain 168).